The chain runs to 641 residues: Tetracycline resistance protein TetQ (641 aa).

In terms of domain architecture, tr-type G spans 1-244; sequence MNIINLGILA…AITSFILPPA (244 aa). Residues 10-17, 74-78, and 128-131 contribute to the GTP site; these read AHIDAGKT, DTPGH, and NKID.

It belongs to the TRAFAC class translation factor GTPase superfamily. Classic translation factor GTPase family. TetM/TetO subfamily.

Its function is as follows. Abolishes the inhibitory effect of tetracyclin on protein synthesis by a non-covalent modification of the ribosomes. This is Tetracycline resistance protein TetQ (tetQ) from Bacteroides thetaiotaomicron.